Reading from the N-terminus, the 34-residue chain is Papillosin (34 aa).

Its function is as follows. Has strong antibacterial activity against the Gram-positive bacteria M.luteus, S.aureus, B.megaterium, A.viridans and E.faecalis, and against the Gram-negative bacteria K.pneumoniae, E.coli DH5alpha, S.typhimurium, P.aeruginosa and E.aerogenes. Lacks hemolytic activity against sheep erythrocytes. The chain is Papillosin from Halocynthia papillosa (Red sea-squirt).